The chain runs to 205 residues: MNQQYPSMLLEKAVGEFAKLPGVGRKTAMRLVLHLLRQDTAVVEAFGNAMITLKHEVKYCKVCHNISDTETCRICSNPARDASTICVVESIRDVMAVEATQQYRGLYHVLGGVISPMDGIGPSDLQIESLVERVKGGEVKEVILALSSTMEGDTTNFYISRKLDGMDVKLSVIARGISIGDELEYTDEVTLGRSIINRTLFTGTA.

The C4-type zinc finger occupies 60–75 (CKVCHNISDTETCRIC). The region spanning 83 to 178 (STICVVESIR…KLSVIARGIS (96 aa)) is the Toprim domain.

This sequence belongs to the RecR family.

Its function is as follows. May play a role in DNA repair. It seems to be involved in an RecBC-independent recombinational process of DNA repair. It may act with RecF and RecO. This is Recombination protein RecR from Phocaeicola vulgatus (strain ATCC 8482 / DSM 1447 / JCM 5826 / CCUG 4940 / NBRC 14291 / NCTC 11154) (Bacteroides vulgatus).